The following is an 89-amino-acid chain: Small ribosomal subunit protein uS15 (89 aa).

The protein belongs to the universal ribosomal protein uS15 family. In terms of assembly, part of the 30S ribosomal subunit. Forms a bridge to the 50S subunit in the 70S ribosome, contacting the 23S rRNA.

Its function is as follows. One of the primary rRNA binding proteins, it binds directly to 16S rRNA where it helps nucleate assembly of the platform of the 30S subunit by binding and bridging several RNA helices of the 16S rRNA. Functionally, forms an intersubunit bridge (bridge B4) with the 23S rRNA of the 50S subunit in the ribosome. In Thermosynechococcus vestitus (strain NIES-2133 / IAM M-273 / BP-1), this protein is Small ribosomal subunit protein uS15.